We begin with the raw amino-acid sequence, 154 residues long: UPF0756 membrane protein CKR_1028 (154 aa).

4 consecutive transmembrane segments (helical) span residues 5 to 25 (IILI…VALA), 48 to 68 (NGLF…IADG), 82 to 102 (WLGI…GLGM), and 113 to 133 (IMPA…GVPV).

This sequence belongs to the UPF0756 family.

The protein resides in the cell membrane. This Clostridium kluyveri (strain NBRC 12016) protein is UPF0756 membrane protein CKR_1028.